Reading from the N-terminus, the 378-residue chain is Erythronate-4-phosphate dehydrogenase (378 aa).

Residues serine 45 and threonine 66 each contribute to the substrate site. Aspartate 146 and threonine 175 together coordinate NAD(+). Residue arginine 208 is part of the active site. NAD(+) is bound at residue aspartate 232. Glutamate 237 is an active-site residue. Histidine 254 serves as the catalytic Proton donor. Residue glycine 257 participates in NAD(+) binding. Residue tyrosine 258 coordinates substrate.

It belongs to the D-isomer specific 2-hydroxyacid dehydrogenase family. PdxB subfamily. In terms of assembly, homodimer.

Its subcellular location is the cytoplasm. The enzyme catalyses 4-phospho-D-erythronate + NAD(+) = (R)-3-hydroxy-2-oxo-4-phosphooxybutanoate + NADH + H(+). The protein operates within cofactor biosynthesis; pyridoxine 5'-phosphate biosynthesis; pyridoxine 5'-phosphate from D-erythrose 4-phosphate: step 2/5. Catalyzes the oxidation of erythronate-4-phosphate to 3-hydroxy-2-oxo-4-phosphonooxybutanoate. This is Erythronate-4-phosphate dehydrogenase from Cronobacter sakazakii (strain ATCC BAA-894) (Enterobacter sakazakii).